Consider the following 203-residue polypeptide: Recombination protein RecR (203 aa).

A C4-type zinc finger spans residues 56-71; it reads CEVCGNVSDADRCRIC. A Toprim domain is found at 79–179; the sequence is SLVCVVEEPK…TVTRIASGLP (101 aa).

It belongs to the RecR family.

In terms of biological role, may play a role in DNA repair. It seems to be involved in an RecBC-independent recombinational process of DNA repair. It may act with RecF and RecO. In Mycobacterium sp. (strain JLS), this protein is Recombination protein RecR.